A 114-amino-acid polypeptide reads, in one-letter code: Late cornified envelope protein 1D (114 aa).

The span at 1-10 shows a compositional bias: low complexity; it reads MSCQQSQQQC. Disordered stretches follow at residues 1 to 21 and 75 to 114; these read MSCQ…PKCT and HHRR…GGCC. Over residues 75–86 the composition is skewed to basic residues; that stretch reads HHRRHRSHRRRP. Over residues 88–99 the composition is skewed to low complexity; that stretch reads SSDCCSQPSGGS.

Belongs to the LCE family. In terms of assembly, interacts with CYSRT1. Skin-specific. Expression was readily detected in adult trunk skin, adult arm skin, fetal skin, penal skin, vulva, esophagus and tongue. Not expressed in the cervix, rectum, lung, colon, or placenta.

Functionally, precursors of the cornified envelope of the stratum corneum. This chain is Late cornified envelope protein 1D (LCE1D), found in Homo sapiens (Human).